We begin with the raw amino-acid sequence, 118 residues long: MTRVKRGNVARKRRNKILKLAKGFRGSHSTLFRTANQQVMKALRSAYRDRKKKKRDFRRLWITRINAAARQHGLSYSQLIGNLKKADIQLNRKMLAQLAVLDPASFGKVAELAIQAKG.

The protein belongs to the bacterial ribosomal protein bL20 family.

Functionally, binds directly to 23S ribosomal RNA and is necessary for the in vitro assembly process of the 50S ribosomal subunit. It is not involved in the protein synthesizing functions of that subunit. This is Large ribosomal subunit protein bL20 from Trichormus variabilis (strain ATCC 29413 / PCC 7937) (Anabaena variabilis).